We begin with the raw amino-acid sequence, 131 residues long: Large ribosomal subunit protein bL12 (131 aa).

It belongs to the bacterial ribosomal protein bL12 family. In terms of assembly, homodimer. Part of the ribosomal stalk of the 50S ribosomal subunit. Forms a multimeric L10(L12)X complex, where L10 forms an elongated spine to which 2 to 4 L12 dimers bind in a sequential fashion. Binds GTP-bound translation factors.

Functionally, forms part of the ribosomal stalk which helps the ribosome interact with GTP-bound translation factors. Is thus essential for accurate translation. This Prochlorococcus marinus subsp. pastoris (strain CCMP1986 / NIES-2087 / MED4) protein is Large ribosomal subunit protein bL12.